A 675-amino-acid polypeptide reads, in one-letter code: DNA ligase (675 aa).

Residues 43–47 (DYEYD), 92–93 (SM), and Glu122 each bind NAD(+). Lys124 functions as the N6-AMP-lysine intermediate in the catalytic mechanism. The NAD(+) site is built by Arg145, Glu179, Lys295, and Lys319. Residues Cys413, Cys416, Cys431, and Cys436 each contribute to the Zn(2+) site. The region spanning 597-675 (SPDGYYKGKK…ETEAIAKFEQ (79 aa)) is the BRCT domain.

Belongs to the NAD-dependent DNA ligase family. LigA subfamily. Requires Mg(2+) as cofactor. Mn(2+) is required as a cofactor.

It carries out the reaction NAD(+) + (deoxyribonucleotide)n-3'-hydroxyl + 5'-phospho-(deoxyribonucleotide)m = (deoxyribonucleotide)n+m + AMP + beta-nicotinamide D-nucleotide.. Its function is as follows. DNA ligase that catalyzes the formation of phosphodiester linkages between 5'-phosphoryl and 3'-hydroxyl groups in double-stranded DNA using NAD as a coenzyme and as the energy source for the reaction. It is essential for DNA replication and repair of damaged DNA. The sequence is that of DNA ligase from Pediococcus pentosaceus (strain ATCC 25745 / CCUG 21536 / LMG 10740 / 183-1w).